We begin with the raw amino-acid sequence, 573 residues long: Splicing factor U2af large subunit B (573 aa).

Residues 1-12 (MPDYEGNGEDID) show a composition bias toward acidic residues. Residues 1-187 (MPDYEGNGED…DMAPPTSAML (187 aa)) are disordered. A compositionally biased stretch (basic and acidic residues) spans 38 to 145 (SDSKSQHSSR…QREHAKDRES (108 aa)). Positions 161-173 (SRSRSRSRSKSKR) are enriched in basic residues. 3 RRM domains span residues 239–322 (RRVY…RPSD), 359–437 (DRIF…RANQ), and 478–564 (EVIS…YPEN).

Belongs to the splicing factor SR family. In terms of tissue distribution, expressed in stems, leaves and apical buds.

Its subcellular location is the nucleus. Necessary for the splicing of pre-mRNA. Binds to the U -enriched regions of plant introns. The polypeptide is Splicing factor U2af large subunit B (U2AF65B) (Nicotiana plumbaginifolia (Leadwort-leaved tobacco)).